The primary structure comprises 283 residues: Elongation factor Ts (283 aa).

Residues 80 to 83 are involved in Mg(2+) ion dislocation from EF-Tu; it reads TDFV.

It belongs to the EF-Ts family.

The protein localises to the cytoplasm. Functionally, associates with the EF-Tu.GDP complex and induces the exchange of GDP to GTP. It remains bound to the aminoacyl-tRNA.EF-Tu.GTP complex up to the GTP hydrolysis stage on the ribosome. In Haemophilus ducreyi (strain 35000HP / ATCC 700724), this protein is Elongation factor Ts.